The primary structure comprises 210 residues: Large ribosomal subunit protein uL3 (210 aa).

Residues 121–150 (GGIKRHGFHRGPMAHGSKYHRRPGSLGAKG) form a disordered region.

The protein belongs to the universal ribosomal protein uL3 family. As to quaternary structure, part of the 50S ribosomal subunit. Forms a cluster with proteins L14 and L19.

Its function is as follows. One of the primary rRNA binding proteins, it binds directly near the 3'-end of the 23S rRNA, where it nucleates assembly of the 50S subunit. This chain is Large ribosomal subunit protein uL3, found in Pelotomaculum thermopropionicum (strain DSM 13744 / JCM 10971 / SI).